A 177-amino-acid chain; its full sequence is Large ribosomal subunit protein uL6 (177 aa).

It belongs to the universal ribosomal protein uL6 family. In terms of assembly, part of the 50S ribosomal subunit.

Its function is as follows. This protein binds to the 23S rRNA, and is important in its secondary structure. It is located near the subunit interface in the base of the L7/L12 stalk, and near the tRNA binding site of the peptidyltransferase center. This Rhizobium meliloti (strain 1021) (Ensifer meliloti) protein is Large ribosomal subunit protein uL6.